The following is a 99-amino-acid chain: uncharacterized protein (99 aa).

The helical transmembrane segment at 6-26 threads the bilayer; it reads LVCSIVFILFILFYDLKIGTI. Residues 48–95 enclose the LysM domain; sequence KTVKVKPGDTVMSIVGSAGSPDDIVKDFEALNPNVKANAIQAGTAYKF.

It localises to the secreted. Its subcellular location is the cell wall. It is found in the membrane. This is an uncharacterized protein from Bacillus subtilis (strain 168).